The following is a 505-amino-acid chain: Protein dml1 (505 aa).

Residues 330 to 358 (LPEDMSNHTQPVQNPEDRRTQASKGGSSK) form a disordered region.

This sequence belongs to the misato family.

It is found in the mitochondrion. Involved in the partitioning of the mitochondrial organelle and mitochondrial DNA (mtDNA) inheritance. The polypeptide is Protein dml1 (dml1) (Aspergillus fumigatus (strain ATCC MYA-4609 / CBS 101355 / FGSC A1100 / Af293) (Neosartorya fumigata)).